We begin with the raw amino-acid sequence, 2040 residues long: MEHKEVVLLLLLFLKSAAPEQSHVVQDCYHGDGQSYRGTYSTTVTGRTCQAWSSMTPHQHNRTTENYPNAGLIMNYCRNPDAVAAPYCYTRDPGVRWEYCNLTQCSDAEGTAVAPPTVTPVPSLEAPSEQAPTEQRPGVQECYHGNGQSYRGTYSTTVTGRTCQAWSSMTPHSHSRTPEYYPNAGLIMNYCRNPDAVAAPYCYTRDPGVRWEYCNLTQCSDAEGTAVAPPTVTPVPSLEAPSEQAPTEQRPGVQECYHGNGQSYRGTYSTTVTGRTCQAWSSMTPHSHSRTPEYYPNAGLIMNYCRNPDAVAAPYCYTRDPGVRWEYCNLTQCSDAEGTAVAPPTVTPVPSLEAPSEQAPTEQRPGVQECYHGNGQSYRGTYSTTVTGRTCQAWSSMTPHSHSRTPEYYPNAGLIMNYCRNPDAVAAPYCYTRDPGVRWEYCNLTQCSDAEGTAVAPPTVTPVPSLEAPSEQAPTEQRPGVQECYHGNGQSYRGTYSTTVTGRTCQAWSSMTPHSHSRTPEYYPNAGLIMNYCRNPDAVAAPYCYTRDPGVRWEYCNLTQCSDAEGTAVAPPTVTPVPSLEAPSEQAPTEQRPGVQECYHGNGQSYRGTYSTTVTGRTCQAWSSMTPHSHSRTPEYYPNAGLIMNYCRNPDAVAAPYCYTRDPGVRWEYCNLTQCSDAEGTAVAPPTVTPVPSLEAPSEQAPTEQRPGVQECYHGNGQSYRGTYSTTVTGRTCQAWSSMTPHSHSRTPEYYPNAGLIMNYCRNPDAVAAPYCYTRDPGVRWEYCNLTQCSDAEGTAVAPPTVTPVPSLEAPSEQAPTEQRPGVQECYHGNGQSYRGTYSTTVTGRTCQAWSSMTPHSHSRTPEYYPNAGLIMNYCRNPDPVAAPYCYTRDPSVRWEYCNLTQCSDAEGTAVAPPTITPIPSLEAPSEQAPTEQRPGVQECYHGNGQSYQGTYFITVTGRTCQAWSSMTPHSHSRTPAYYPNAGLIKNYCRNPDPVAAPWCYTTDPSVRWEYCNLTRCSDAEWTAFVPPNVILAPSLEAFFEQALTEETPGVQDCYYHYGQSYRGTYSTTVTGRTCQAWSSMTPHQHSRTPENYPNAGLTRNYCRNPDAEIRPWCYTMDPSVRWEYCNLTQCLVTESSVLATLTVVPDPSTEASSEEAPTEQSPGVQDCYHGDGQSYRGSFSTTVTGRTCQSWSSMTPHWHQRTTEYYPNGGLTRNYCRNPDAEISPWCYTMDPNVRWEYCNLTQCPVTESSVLATSTAVSEQAPTEQSPTVQDCYHGDGQSYRGSFSTTVTGRTCQSWSSMTPHWHQRTTEYYPNGGLTRNYCRNPDAEIRPWCYTMDPSVRWEYCNLTQCPVMESTLLTTPTVVPVPSTELPSEEAPTENSTGVQDCYRGDGQSYRGTLSTTITGRTCQSWSSMTPHWHRRIPLYYPNAGLTRNYCRNPDAEIRPWCYTMDPSVRWEYCNLTRCPVTESSVLTTPTVAPVPSTEAPSEQAPPEKSPVVQDCYHGDGRSYRGISSTTVTGRTCQSWSSMIPHWHQRTPENYPNAGLTENYCRNPDSGKQPWCYTTDPCVRWEYCNLTQCSETESGVLETPTVVPVPSMEAHSEAAPTEQTPVVRQCYHGNGQSYRGTFSTTVTGRTCQSWSSMTPHRHQRTPENYPNDGLTMNYCRNPDADTGPWCFTMDPSIRWEYCNLTRCSDTEGTVVAPPTVIQVPSLGPPSEQDCMFGNGKGYRGKKATTVTGTPCQEWAAQEPHRHSTFIPGTNKWAGLEKNYCRNPDGDINGPWCYTMNPRKLFDYCDIPLCASSSFDCGKPQVEPKKCPGSIVGGCVAHPHSWPWQVSLRTRFGKHFCGGTLISPEWVLTAAHCLKKSSRPSSYKVILGAHQEVNLESHVQEIEVSRLFLEPTQADIALLKLSRPAVITDKVMPACLPSPDYMVTARTECYITGWGETQGTFGTGLLKEAQLLVIENEVCNHYKYICAEHLARGTDSCQGDSGGPLVCFEKDKYILQGVTSWGLGCARPNKPGVYARVSRFVTWIEGMMRNN.

An N-terminal signal peptide occupies residues 1–19 (MEHKEVVLLLLLFLKSAAP). 10 consecutive Kringle domains span residues 27–105 (DCYH…LTQC), 141–219 (ECYH…LTQC), 255–333 (ECYH…LTQC), 369–447 (ECYH…LTQC), 483–561 (ECYH…LTQC), 597–675 (ECYH…LTQC), 711–789 (ECYH…LTQC), 825–903 (ECYH…LTQC), 939–1017 (ECYH…LTRC), and 1053–1131 (DCYY…LTQC). Intrachain disulfides connect Cys-28/Cys-105, Cys-49/Cys-88, Cys-77/Cys-100, Cys-142/Cys-219, Cys-163/Cys-202, Cys-191/Cys-214, Cys-256/Cys-333, Cys-277/Cys-316, Cys-305/Cys-328, Cys-370/Cys-447, Cys-391/Cys-430, Cys-419/Cys-442, Cys-484/Cys-561, Cys-505/Cys-544, Cys-533/Cys-556, Cys-598/Cys-675, Cys-619/Cys-658, Cys-647/Cys-670, Cys-712/Cys-789, Cys-733/Cys-772, Cys-761/Cys-784, Cys-826/Cys-903, Cys-847/Cys-886, Cys-875/Cys-898, Cys-940/Cys-1017, Cys-961/Cys-1000, Cys-989/Cys-1012, Cys-1054/Cys-1131, Cys-1075/Cys-1114, and Cys-1103/Cys-1126. Asn-61 is a glycosylation site (N-linked (GlcNAc...) asparagine). Asn-101 is a glycosylation site (N-linked (GlcNAc...) asparagine). Asn-215 carries N-linked (GlcNAc...) asparagine glycosylation. Residue Asn-329 is glycosylated (N-linked (GlcNAc...) asparagine). Asn-443 carries N-linked (GlcNAc...) asparagine glycosylation. The N-linked (GlcNAc...) asparagine glycan is linked to Asn-557. A glycan (N-linked (GlcNAc...) asparagine) is linked at Asn-671. Asn-785 carries an N-linked (GlcNAc...) asparagine glycan. N-linked (GlcNAc...) asparagine glycosylation occurs at Asn-899. N-linked (GlcNAc...) asparagine glycosylation is present at Asn-1013. A glycan (N-linked (GlcNAc...) asparagine) is linked at Asn-1127. Residues 1147-1166 (DPSTEASSEEAPTEQSPGVQ) are disordered. Kringle domains follow at residues 1167 to 1245 (DCYH…LTQC) and 1273 to 1351 (DCYH…LTQC). 6 cysteine pairs are disulfide-bonded: Cys-1168–Cys-1245, Cys-1189–Cys-1228, Cys-1217–Cys-1240, Cys-1274–Cys-1351, Cys-1295–Cys-1334, and Cys-1323–Cys-1346. A glycan (N-linked (GlcNAc...) asparagine) is linked at Asn-1241. 2 N-linked (GlcNAc...) asparagine glycosylation sites follow: Asn-1347 and Asn-1381. Positions 1365–1388 (VPVPSTELPSEEAPTENSTGVQDC) are disordered. A Kringle 13 domain is found at 1387 to 1465 (DCYRGDGQSY…RWEYCNLTRC (79 aa)). 3 cysteine pairs are disulfide-bonded: Cys-1388-Cys-1465, Cys-1409-Cys-1448, and Cys-1437-Cys-1460. Asn-1461 is a glycosylation site (N-linked (GlcNAc...) asparagine). Residues 1476-1497 (PTVAPVPSTEAPSEQAPPEKSP) are disordered. 3 Kringle domains span residues 1501–1579 (DCYH…LTQC), 1615–1693 (QCYH…LTRC), and 1719–1799 (DCMF…IPLC). 10 disulfides stabilise this stretch: Cys-1502/Cys-1579, Cys-1523/Cys-1562, Cys-1551/Cys-1574, Cys-1616/Cys-1693, Cys-1637/Cys-1676, Cys-1665/Cys-1688, Cys-1720/Cys-1799, Cys-1741/Cys-1782, Cys-1770/Cys-1794, and Cys-1846/Cys-1862. An N-linked (GlcNAc...) asparagine glycan is attached at Asn-1575. A glycan (N-linked (GlcNAc...) asparagine) is linked at Asn-1689. Positions 1820–2038 (IVGGCVAHPH…FVTWIEGMMR (219 aa)) constitute a Peptidase S1 domain. Active-site charge relay system residues include His-1861 and Asp-1904. Cystine bridges form between Cys-1938/Cys-1996, Cys-1968/Cys-1975, and Cys-1986/Cys-2014. The active-site Charge relay system is Ser-1990.

It belongs to the peptidase S1 family. Plasminogen subfamily. In terms of assembly, disulfide-linked to apo-B100. Binds to fibronectin and decorin. Post-translationally, N- and O-glycosylated. The N-glycans are complex biantennary structures present in either a mono- or disialylated state. The O-glycans are mostly (80%) represented by the monosialylated core type I structure, NeuNAcalpha2-3Galbeta1-3GalNAc, with smaller amounts of disialylated and non-sialylated O-glycans also detected.

Functionally, apo(a) is the main constituent of lipoprotein(a) (Lp(a)). It has serine proteinase activity and is able of autoproteolysis. Inhibits tissue-type plasminogen activator 1. Lp(a) may be a ligand for megalin/Gp 330. The polypeptide is Apolipoprotein(a) (LPA) (Homo sapiens (Human)).